Consider the following 358-residue polypeptide: Gentisate 1,2-dioxygenase (358 aa).

The 120-residue stretch at 239 to 358 folds into the Cupin type-1 domain; that stretch reads QTLRQRAEND…AFNFYAEAEP (120 aa).

It belongs to the gentisate 1,2-dioxygenase family. In terms of assembly, homotetramer.

It catalyses the reaction 2,5-dihydroxybenzoate + O2 = 3-maleylpyruvate + H(+). It participates in aromatic compound metabolism; naphthalene degradation. Its activity is regulated as follows. Inhibited by 2,2'-dipyridyl. Its function is as follows. Catalyzes the oxygen-dependent ring fission of gentisate between the carboxyl and proximal hydroxyl groups at positions 1 and 2 of the aromatic ring to form maleylpyruvate. No activity with cathechol and protecatechuate as substrates. Part of a 3-hydroxybenzoic acid-degradation pathway. In Haloferax sp, this protein is Gentisate 1,2-dioxygenase (gdoA).